The following is a 1151-amino-acid chain: Protein kinase C-like 1 (1151 aa).

2 consecutive REM-1 domains span residues 1 to 67 (MSFS…KTAQ) and 106 to 183 (KYDC…INVD). Residues 64–88 (KTAQQSQGENGSEDNERCNSKEYGF) form a disordered region. The 120-residue stretch at 190 to 309 (QPNDIMDNQQ…IRKKKAGQTN (120 aa)) folds into the C2 domain. Ser-226 carries the phosphoserine modification. The segment at 306–331 (GQTNEQQGWVNASNINGGSSLASEEG) is disordered. 2 consecutive Phorbol-ester/DAG-type zinc fingers follow at residues 414–461 (GHHF…VTKC) and 481–531 (PHRF…PDFC). Disordered regions lie at residues 546 to 620 (QDTK…IIDK) and 649 to 669 (AQQTAEFSSPEKTLDPTSNRR). Residues 560 to 577 (PSAQLGSSIGTANGSDLS) are compositionally biased toward polar residues. Positions 605–620 (VGRDSPTKQHDPIIDK) are enriched in basic and acidic residues. Phosphoserine is present on Ser-761. The interval 782-816 (LAPTSTHASRTTDQQSPQKSQTSTSAKHKKRAAKR) is disordered. A compositionally biased stretch (low complexity) spans 792–806 (TTDQQSPQKSQTSTS). A compositionally biased stretch (basic residues) spans 807–816 (AKHKKRAAKR). The region spanning 824–1083 (FVLLKVLGKG…ADEVMEEPFF (260 aa)) is the Protein kinase domain. Residues 830–838 (LGKGNFGKV) and Lys-853 contribute to the ATP site. Residue Asp-949 is the Proton acceptor of the active site. The region spanning 1084–1151 (RNINFDDILN…FSFMPDDLDL (68 aa)) is the AGC-kinase C-terminal domain.

The protein belongs to the protein kinase superfamily. AGC Ser/Thr protein kinase family. PKC subfamily.

The enzyme catalyses L-seryl-[protein] + ATP = O-phospho-L-seryl-[protein] + ADP + H(+). It catalyses the reaction L-threonyl-[protein] + ATP = O-phospho-L-threonyl-[protein] + ADP + H(+). Functionally, required for cell growth and for the G2-&gt;M transition of the cell division cycle. Mediates a protein kinase cascade; it activates BCK1 which itself activates MKK1/MKK2. This Saccharomyces cerevisiae (strain ATCC 204508 / S288c) (Baker's yeast) protein is Protein kinase C-like 1 (PKC1).